Consider the following 121-residue polypeptide: Large ribosomal subunit protein uL24 (121 aa).

The interval Met-1–Ala-30 is disordered.

This sequence belongs to the universal ribosomal protein uL24 family. In terms of assembly, part of the 50S ribosomal subunit.

One of two assembly initiator proteins, it binds directly to the 5'-end of the 23S rRNA, where it nucleates assembly of the 50S subunit. In terms of biological role, located at the polypeptide exit tunnel on the outside of the subunit. The polypeptide is Large ribosomal subunit protein uL24 (Methanoculleus marisnigri (strain ATCC 35101 / DSM 1498 / JR1)).